The primary structure comprises 79 residues: Reactive oxygen species modulator 1 (79 aa).

A helical transmembrane segment spans residues 22–44; sequence GFVMGCAVGMAAGALFGTFSCLR. Residues 42–60 are sufficient for antibacterial activity; that stretch reads CLRIGMRGRELMGGIGKTM.

The protein belongs to the MGR2 family.

It localises to the mitochondrion inner membrane. Has antibacterial activity against a variety of bacteria including S.aureus, P.aeruginosa and M.tuberculosis. Acts by inducing bacterial membrane breakage. Its function is as follows. Induces production of reactive oxygen species (ROS) which are necessary for cell proliferation. May play a role in inducing oxidative DNA damage and replicative senescence. May play a role in the coordination of mitochondrial morphology and cell proliferation. This chain is Reactive oxygen species modulator 1 (ROMO1), found in Bos taurus (Bovine).